Reading from the N-terminus, the 259-residue chain is Type III pantothenate kinase (259 aa).

An ATP-binding site is contributed by 6 to 13 (DVGNTNCT). 107-110 (GSDR) is a substrate binding site. Catalysis depends on Asp109, which acts as the Proton acceptor. Residue Asp129 coordinates K(+). Thr132 is a binding site for ATP. Thr184 lines the substrate pocket.

Belongs to the type III pantothenate kinase family. As to quaternary structure, homodimer. NH4(+) is required as a cofactor. The cofactor is K(+).

The protein localises to the cytoplasm. The catalysed reaction is (R)-pantothenate + ATP = (R)-4'-phosphopantothenate + ADP + H(+). It participates in cofactor biosynthesis; coenzyme A biosynthesis; CoA from (R)-pantothenate: step 1/5. In terms of biological role, catalyzes the phosphorylation of pantothenate (Pan), the first step in CoA biosynthesis. The sequence is that of Type III pantothenate kinase from Listeria innocua serovar 6a (strain ATCC BAA-680 / CLIP 11262).